Consider the following 196-residue polypeptide: FMN-dependent NADH:quinone oxidoreductase (196 aa).

Residue Ser-10 coordinates FMN.

The protein belongs to the azoreductase type 1 family. Homodimer. Requires FMN as cofactor.

It carries out the reaction 2 a quinone + NADH + H(+) = 2 a 1,4-benzosemiquinone + NAD(+). It catalyses the reaction N,N-dimethyl-1,4-phenylenediamine + anthranilate + 2 NAD(+) = 2-(4-dimethylaminophenyl)diazenylbenzoate + 2 NADH + 2 H(+). In terms of biological role, quinone reductase that provides resistance to thiol-specific stress caused by electrophilic quinones. Functionally, also exhibits azoreductase activity. Catalyzes the reductive cleavage of the azo bond in aromatic azo compounds to the corresponding amines. This is FMN-dependent NADH:quinone oxidoreductase from Cereibacter sphaeroides (strain KD131 / KCTC 12085) (Rhodobacter sphaeroides).